A 392-amino-acid polypeptide reads, in one-letter code: Alanine racemase 2 (392 aa).

The Proton acceptor; specific for D-alanine role is filled by Lys-40. Position 40 is an N6-(pyridoxal phosphate)lysine (Lys-40). Arg-138 is a substrate binding site. The active-site Proton acceptor; specific for L-alanine is the Tyr-266. Met-314 is a substrate binding site.

This sequence belongs to the alanine racemase family. Pyridoxal 5'-phosphate serves as cofactor.

The catalysed reaction is L-alanine = D-alanine. Its pathway is amino-acid biosynthesis; D-alanine biosynthesis; D-alanine from L-alanine: step 1/1. Its function is as follows. Catalyzes the interconversion of L-alanine and D-alanine. May also act on other amino acids. The sequence is that of Alanine racemase 2 (alr2) from Oceanobacillus iheyensis (strain DSM 14371 / CIP 107618 / JCM 11309 / KCTC 3954 / HTE831).